Here is a 208-residue protein sequence, read N- to C-terminus: Glycerol-3-phosphate acyltransferase (208 aa).

The next 5 membrane-spanning stretches (helical) occupy residues 4–24 (LALS…AVLI), 56–76 (VAVL…GYFL), 80–100 (PFML…PIFF), 117–137 (PIGL…VVLF), and 139–159 (YSSL…WLIK).

Belongs to the PlsY family. In terms of assembly, probably interacts with PlsX.

It is found in the cell inner membrane. The catalysed reaction is an acyl phosphate + sn-glycerol 3-phosphate = a 1-acyl-sn-glycero-3-phosphate + phosphate. It participates in lipid metabolism; phospholipid metabolism. Catalyzes the transfer of an acyl group from acyl-phosphate (acyl-PO(4)) to glycerol-3-phosphate (G3P) to form lysophosphatidic acid (LPA). This enzyme utilizes acyl-phosphate as fatty acyl donor, but not acyl-CoA or acyl-ACP. This is Glycerol-3-phosphate acyltransferase from Vibrio cholerae serotype O1 (strain ATCC 39541 / Classical Ogawa 395 / O395).